A 340-amino-acid chain; its full sequence is 4-hydroxy-2-oxovalerate aldolase (340 aa).

The region spanning V8 to M260 is the Pyruvate carboxyltransferase domain. R16 to D17 is a binding site for substrate. D17 contacts Mn(2+). Catalysis depends on H20, which acts as the Proton acceptor. The substrate site is built by S170 and H199. Mn(2+)-binding residues include H199 and H201. Y290 is a binding site for substrate.

The protein belongs to the 4-hydroxy-2-oxovalerate aldolase family.

It carries out the reaction (S)-4-hydroxy-2-oxopentanoate = acetaldehyde + pyruvate. The protein is 4-hydroxy-2-oxovalerate aldolase of Shewanella halifaxensis (strain HAW-EB4).